A 498-amino-acid polypeptide reads, in one-letter code: U4/U6 small nuclear ribonucleoprotein Prp31 (498 aa).

Coiled-coil stretches lie at residues 84-119 and 180-214; these read EAAP…KYSK and DEEL…MSFI. The region spanning 214–332 is the Nop domain; it reads IAPNLSIIVG…IERKFDKWQE (119 aa). A disordered region spans residues 333–356; the sequence is PPPVKQVKPLPAPLDGQRKKRGGR. A Nuclear localization signal (NLS) motif is present at residues 350–363; it reads RKKRGGRRYRKMKE.

The protein belongs to the PRP31 family. Identified in the spliceosome B complex. Component of the U4/U6-U5 tri-snRNP complex. Component of some MLL1/MLL complex.

Its subcellular location is the nucleus. It is found in the nucleus speckle. The protein localises to the cajal body. In terms of biological role, involved in pre-mRNA splicing as component of the spliceosome. Required for the assembly of the U4/U5/U6 tri-snRNP complex, one of the building blocks of the spliceosome. The polypeptide is U4/U6 small nuclear ribonucleoprotein Prp31 (prpf31) (Xenopus tropicalis (Western clawed frog)).